We begin with the raw amino-acid sequence, 63 residues long: Large ribosomal subunit protein bL28 (63 aa).

The protein belongs to the bacterial ribosomal protein bL28 family.

The protein is Large ribosomal subunit protein bL28 of Hydrogenobaculum sp. (strain Y04AAS1).